Here is a 568-residue protein sequence, read N- to C-terminus: 2-succinyl-5-enolpyruvyl-6-hydroxy-3-cyclohexene-1-carboxylate synthase (568 aa).

Belongs to the TPP enzyme family. MenD subfamily. As to quaternary structure, homodimer. Requires Mg(2+) as cofactor. Mn(2+) serves as cofactor. Thiamine diphosphate is required as a cofactor.

The enzyme catalyses isochorismate + 2-oxoglutarate + H(+) = 5-enolpyruvoyl-6-hydroxy-2-succinyl-cyclohex-3-ene-1-carboxylate + CO2. Its pathway is quinol/quinone metabolism; 1,4-dihydroxy-2-naphthoate biosynthesis; 1,4-dihydroxy-2-naphthoate from chorismate: step 2/7. The protein operates within quinol/quinone metabolism; menaquinone biosynthesis. In terms of biological role, catalyzes the thiamine diphosphate-dependent decarboxylation of 2-oxoglutarate and the subsequent addition of the resulting succinic semialdehyde-thiamine pyrophosphate anion to isochorismate to yield 2-succinyl-5-enolpyruvyl-6-hydroxy-3-cyclohexene-1-carboxylate (SEPHCHC). The polypeptide is 2-succinyl-5-enolpyruvyl-6-hydroxy-3-cyclohexene-1-carboxylate synthase (Pasteurella multocida (strain Pm70)).